We begin with the raw amino-acid sequence, 310 residues long: MKITTKVLIIGSGPAGLSAAIYTARAALKPILINGMQPGGQLTITTDVENYPGFAETVQGPWLMEQMYMQAKNVGTEIVSDYVEKVDLSKRPFKVFTGAGNEYDAESIIICTGAEAKWLGIASEQKFRGFGVSACATCDGFFFKNQEIVVVGGGNSAVEEALYLTNHANKVTIVHRRDSFRAEKILQDRLFKNSKISVIWDHVVDEIVGSNKPKSVTGVKIQNVHTKEISLLNCSGVFIAIGHAPNTGLFTGQIVMDDDNYIITKSGTTRTSVEGVFAAGDVQDKIYRQAVTAAGTGCMAALEAEKFLNK.

Position 34–41 (34–41 (NGMQPGGQ)) interacts with FAD. Cysteines 135 and 138 form a disulfide. Position 281–290 (281–290 (DVQDKIYRQA)) interacts with FAD.

It belongs to the class-II pyridine nucleotide-disulfide oxidoreductase family. Homodimer. FAD serves as cofactor.

Its subcellular location is the cytoplasm. It carries out the reaction [thioredoxin]-dithiol + NADP(+) = [thioredoxin]-disulfide + NADPH + H(+). The sequence is that of Thioredoxin reductase (trxB) from Rickettsia conorii (strain ATCC VR-613 / Malish 7).